The following is a 482-amino-acid chain: Anaerobic nitric oxide reductase flavorubredoxin (482 aa).

A zinc metallo-hydrolase region spans residues 30–210; it reads LRGSSYNSYL…PFSRLVTPKI (181 aa). Positions 79, 81, 83, 147, 166, and 227 each coordinate Fe cation. In terms of domain architecture, Flavodoxin-like spans 254-393; sequence ITIFYDTMSN…LCRQHGRDIA (140 aa). Residues 260-264 and 342-369 contribute to the FMN site; these read TMSNN and AFGS…EMSL. Positions 426-477 constitute a Rubredoxin-like domain; sequence GPSMQCSVCQWIYDPAKGEPLQDVAPGTPWSDVPDNFLCPECSLGKDVFDVL. Positions 431, 434, 464, and 467 each coordinate Fe cation.

This sequence in the N-terminal section; belongs to the zinc metallo-hydrolase group 3 family. As to quaternary structure, homotetramer. Fe cation serves as cofactor. Requires FMN as cofactor.

Its subcellular location is the cytoplasm. The protein operates within nitrogen metabolism; nitric oxide reduction. Functionally, anaerobic nitric oxide reductase; uses NADH to detoxify nitric oxide (NO), protecting several 4Fe-4S NO-sensitive enzymes. Has at least 2 reductase partners, only one of which (NorW, flavorubredoxin reductase) has been identified. NO probably binds to the di-iron center; electrons enter from the NorW at rubredoxin and are transferred sequentially to the FMN center and the di-iron center. Also able to function as an aerobic oxygen reductase. The polypeptide is Anaerobic nitric oxide reductase flavorubredoxin (Citrobacter koseri (strain ATCC BAA-895 / CDC 4225-83 / SGSC4696)).